A 235-amino-acid polypeptide reads, in one-letter code: Thiamine-phosphate synthase (235 aa).

Residues 50–54 (QLRDK) and N91 contribute to the 4-amino-2-methyl-5-(diphosphooxymethyl)pyrimidine site. D92 and D111 together coordinate Mg(2+). S130 contacts 4-amino-2-methyl-5-(diphosphooxymethyl)pyrimidine. 2-[(2R,5Z)-2-carboxy-4-methylthiazol-5(2H)-ylidene]ethyl phosphate is bound at residue 160-162 (TPT). A 4-amino-2-methyl-5-(diphosphooxymethyl)pyrimidine-binding site is contributed by K163. G191 is a binding site for 2-[(2R,5Z)-2-carboxy-4-methylthiazol-5(2H)-ylidene]ethyl phosphate.

The protein belongs to the thiamine-phosphate synthase family. It depends on Mg(2+) as a cofactor.

The catalysed reaction is 2-[(2R,5Z)-2-carboxy-4-methylthiazol-5(2H)-ylidene]ethyl phosphate + 4-amino-2-methyl-5-(diphosphooxymethyl)pyrimidine + 2 H(+) = thiamine phosphate + CO2 + diphosphate. It carries out the reaction 2-(2-carboxy-4-methylthiazol-5-yl)ethyl phosphate + 4-amino-2-methyl-5-(diphosphooxymethyl)pyrimidine + 2 H(+) = thiamine phosphate + CO2 + diphosphate. The enzyme catalyses 4-methyl-5-(2-phosphooxyethyl)-thiazole + 4-amino-2-methyl-5-(diphosphooxymethyl)pyrimidine + H(+) = thiamine phosphate + diphosphate. It functions in the pathway cofactor biosynthesis; thiamine diphosphate biosynthesis; thiamine phosphate from 4-amino-2-methyl-5-diphosphomethylpyrimidine and 4-methyl-5-(2-phosphoethyl)-thiazole: step 1/1. In terms of biological role, condenses 4-methyl-5-(beta-hydroxyethyl)thiazole monophosphate (THZ-P) and 2-methyl-4-amino-5-hydroxymethyl pyrimidine pyrophosphate (HMP-PP) to form thiamine monophosphate (TMP). This is Thiamine-phosphate synthase from Mycobacterium leprae (strain TN).